A 297-amino-acid chain; its full sequence is Ketohexokinase (297 aa).

Positions 15, 41, 42, and 45 each coordinate beta-D-fructose. ATP contacts are provided by residues Arg107, 225 to 228 (AEEG), and 254 to 257 (GAGD). Asp257 serves as a coordination point for beta-D-fructose.

The protein belongs to the carbohydrate kinase PfkB family. In terms of assembly, homodimer.

It catalyses the reaction beta-D-fructose + ATP = beta-D-fructose 1-phosphate + ADP + H(+). It functions in the pathway carbohydrate metabolism; fructose metabolism. With respect to regulation, requires potassium. Inhibition by ADP. In terms of biological role, catalyzes the phosphorylation of the ketose sugar fructose to fructose-1-phosphate. The polypeptide is Ketohexokinase (KHK) (Pongo abelii (Sumatran orangutan)).